The chain runs to 347 residues: Phenylalanine--tRNA ligase alpha subunit (347 aa).

Glu265 provides a ligand contact to Mg(2+).

It belongs to the class-II aminoacyl-tRNA synthetase family. Phe-tRNA synthetase alpha subunit type 1 subfamily. In terms of assembly, tetramer of two alpha and two beta subunits. Requires Mg(2+) as cofactor.

The protein localises to the cytoplasm. The enzyme catalyses tRNA(Phe) + L-phenylalanine + ATP = L-phenylalanyl-tRNA(Phe) + AMP + diphosphate + H(+). This is Phenylalanine--tRNA ligase alpha subunit from Mycolicibacterium paratuberculosis (strain ATCC BAA-968 / K-10) (Mycobacterium paratuberculosis).